The primary structure comprises 168 residues: MLSVETHAAAPWPDALDWAARAAEAVAAAFAITPFAALADAAPLVEVAVRLTDDAEVHTLNRDFRGRDKPTNVLSFPQVQNDLLESLANSDDGEILLGDIVLARETCAREADEKGVSLAAHATHLIVHGALHLVGYDHMDDVSAAAMEALEVKALASLGIANPYADQD.

The Zn(2+) site is built by H128, H132, and H138.

This sequence belongs to the endoribonuclease YbeY family. It depends on Zn(2+) as a cofactor.

Its subcellular location is the cytoplasm. Its function is as follows. Single strand-specific metallo-endoribonuclease involved in late-stage 70S ribosome quality control and in maturation of the 3' terminus of the 16S rRNA. This is Endoribonuclease YbeY from Sphingopyxis alaskensis (strain DSM 13593 / LMG 18877 / RB2256) (Sphingomonas alaskensis).